A 154-amino-acid polypeptide reads, in one-letter code: Large ribosomal subunit protein uL30 (154 aa).

The protein belongs to the universal ribosomal protein uL30 family. As to quaternary structure, part of the 50S ribosomal subunit.

This chain is Large ribosomal subunit protein uL30, found in Methanocaldococcus jannaschii (strain ATCC 43067 / DSM 2661 / JAL-1 / JCM 10045 / NBRC 100440) (Methanococcus jannaschii).